We begin with the raw amino-acid sequence, 339 residues long: tRNA N6-adenosine threonylcarbamoyltransferase (339 aa).

His111 and His115 together coordinate Fe cation. Residues 134-138, Asp167, Gly180, and Asn279 each bind substrate; that span reads VVSGG. Asp307 is a Fe cation binding site.

This sequence belongs to the KAE1 / TsaD family. Fe(2+) is required as a cofactor.

The protein resides in the cytoplasm. It catalyses the reaction L-threonylcarbamoyladenylate + adenosine(37) in tRNA = N(6)-L-threonylcarbamoyladenosine(37) in tRNA + AMP + H(+). In terms of biological role, required for the formation of a threonylcarbamoyl group on adenosine at position 37 (t(6)A37) in tRNAs that read codons beginning with adenine. Is involved in the transfer of the threonylcarbamoyl moiety of threonylcarbamoyl-AMP (TC-AMP) to the N6 group of A37, together with TsaE and TsaB. TsaD likely plays a direct catalytic role in this reaction. The chain is tRNA N6-adenosine threonylcarbamoyltransferase from Syntrophobacter fumaroxidans (strain DSM 10017 / MPOB).